Consider the following 215-residue polypeptide: Ribonuclease T (215 aa).

Residues 20 to 194 form the Exonuclease domain; the sequence is VVIDVETAGF…YDTERTAVLF (175 aa). Residues Asp-23, Glu-25, His-181, and Asp-186 each contribute to the Mg(2+) site. The Proton donor/acceptor role is filled by His-181.

This sequence belongs to the RNase T family. As to quaternary structure, homodimer. Requires Mg(2+) as cofactor.

In terms of biological role, trims short 3' overhangs of a variety of RNA species, leaving a one or two nucleotide 3' overhang. Responsible for the end-turnover of tRNA: specifically removes the terminal AMP residue from uncharged tRNA (tRNA-C-C-A). Also appears to be involved in tRNA biosynthesis, especially in strains lacking other exoribonucleases. A general regulator of small RNAs (sRNA), contributes to their degradation. Upon overexpression suppresses sRNA-mediated RhyB-silencing of multiple RNA targets; overexpression leads to nearly complete loss of RhyB sRNA. This is Ribonuclease T from Escherichia coli (strain K12).